The primary structure comprises 1147 residues: Multiple epidermal growth factor-like domains protein 10 (1147 aa).

The first 25 residues, 1 to 25 (MAISSSSCLGLICSLLCHWVGTASS), serve as a signal peptide directing secretion. Residues 1–857 (MAISSSSCLG…ALPADSYQIG (857 aa)) are necessary for interaction with AP2M1, self-assembly and formation of the irregular, mosaic-like adhesion pattern. Topologically, residues 26–857 (LNLEDPNVCS…ALPADSYQIG (832 aa)) are extracellular. Residues 30–107 (DPNVCSHWES…FYESRDMCVP (78 aa)) form the EMI domain. 47 disulfides stabilise this stretch: C34–C95, C60–C69, C94–C105, C109–C124, C126–C135, C148–C160, C154–C167, C169–C178, C191–C203, C197–C210, C212–C221, C234–C246, C240–C253, C255–C264, C281–C289, C283–C296, C298–C307, C320–C332, C326–C339, C341–C350, C409–C421, C415–C428, C430–C439, C456–C464, C458–C471, C473–C482, C495–C507, C501–C514, C516–C525, C542–C550, C544–C557, C559–C568, C581–C593, C587–C600, C602–C611, C669–C681, C675–C688, C690–C699, C716–C724, C718–C731, C733–C742, C755–C767, C761–C774, C776–C785, C802–C810, C804–C817, and C819–C828. EGF-like domains are found at residues 101 to 136 (SRDM…TNCS), 144 to 179 (WGPH…WRCE), 187 to 222 (YGND…AFCE), 230 to 265 (HGPH…TVCG), 278 to 308 (SQEC…ERCQ), 316 to 351 (YGVR…ELCE), 405 to 440 (YGEA…TDCS), 453 to 483 (SSRC…VDCS), 491 to 526 (WGFG…AKCE), 539 to 569 (AERC…VHCD), 577 to 612 (WGPN…TTCQ), 665 to 700 (FGKN…SDCS), 713 to 743 (IHTC…LYCT), 751 to 786 (YGKD…RHCE), and 799 to 829 (RQIC…ARCD). N134 carries an N-linked (GlcNAc...) asparagine glycan. N496 carries an N-linked (GlcNAc...) asparagine glycan. The helical transmembrane segment at 858–878 (AIAGIVVLVLVVLFLLALFII) threads the bilayer. Residues 879-1147 (YRHKQKRKES…STSSSSSSSE (269 aa)) lie on the Cytoplasmic side of the membrane. Residues 945–1147 (RDRMTIAKSK…STSSSSSSSE (203 aa)) are necessary for formation of large intracellular vacuoles. Y1030 carries the phosphotyrosine modification. The disordered stretch occupies residues 1093–1147 (HVTQDPYDLPKNSHIPCHYDLLPVRDSSSSPKREDGGGSNSTSSNSTSSSSSSSE). Residues 1132–1147 (NSTSSNSTSSSSSSSE) show a composition bias toward low complexity.

It belongs to the MEGF family. Homomer. Interacts with GULP1 and ABCA1. Interacts with AP2M1. Does not interact with MEGF11. Binds with high affinity to complement C1q. Interacts (via the cytoplasmic domain) with NOTCH1 (via NICD domain). Post-translationally, ubiquitinated; mono- and polyubiquitinated forms are detected. In terms of processing, phosphorylated on tyrosine residues. Phosphorylation at Tyr-1030 may be important for muscle cell proliferation. In terms of tissue distribution, expressed in cerebellum (at protein level). Expressed in kidney, stellate cells of the cerebellum and macrophage cell lines.

Its subcellular location is the cell membrane. The protein localises to the cell projection. It localises to the phagocytic cup. Membrane receptor involved in phagocytosis by macrophages and astrocytes of apoptotic cells. Receptor for C1q, an eat-me signal, that binds phosphatidylserine expressed on the surface of apoptotic cells. Cooperates with ABCA1 within the process of engulfment. Promotes the formation of large intracellular vacuoles and may be responsible for the uptake of amyloid-beta peptides. Necessary for astrocyte-dependent apoptotic neuron clearance in the developing cerebellum. Plays a role in muscle cell proliferation, adhesion and motility. Is also an essential factor in the regulation of myogenesis. Controls the balance between skeletal muscle satellite cells proliferation and differentiation through regulation of the notch signaling pathway. May also function in the mosaic spacing of specific neuron subtypes in the retina through homotypic retinal neuron repulsion. Mosaics provide a mechanism to distribute each cell type evenly across the retina, ensuring that all parts of the visual field have access to a full set of processing elements. The sequence is that of Multiple epidermal growth factor-like domains protein 10 from Mus musculus (Mouse).